The primary structure comprises 717 residues: Amino-acid acetyltransferase, mitochondrial (717 aa).

A mitochondrion-targeting transit peptide spans 1 to 23 (MFIWTKAPARGLGKASKILPKRD). A disordered region spans residues 35-70 (KQFHTATTSVRRSSSSAKERQRAERQQLTRLLKESP). Residues 39–50 (TATTSVRRSSSS) are compositionally biased toward low complexity. Positions 51-70 (AKERQRAERQQLTRLLKESP) are enriched in basic and acidic residues. An N-acetyltransferase domain is found at 518-691 (NPSIELADDP…GDVDDAKKRD (174 aa)).

The protein belongs to the acetyltransferase family.

The protein localises to the mitochondrion. The enzyme catalyses L-glutamate + acetyl-CoA = N-acetyl-L-glutamate + CoA + H(+). Its pathway is amino-acid biosynthesis; L-arginine biosynthesis; N(2)-acetyl-L-ornithine from L-glutamate: step 1/4. In terms of biological role, N-acetylglutamate synthase involved in arginine biosynthesis. The protein is Amino-acid acetyltransferase, mitochondrial (arg2) of Pyrenophora tritici-repentis (strain Pt-1C-BFP) (Wheat tan spot fungus).